A 250-amino-acid polypeptide reads, in one-letter code: Probable transcriptional regulatory protein Mmc1_0479 (250 aa).

It belongs to the TACO1 family.

The protein resides in the cytoplasm. The protein is Probable transcriptional regulatory protein Mmc1_0479 of Magnetococcus marinus (strain ATCC BAA-1437 / JCM 17883 / MC-1).